A 295-amino-acid polypeptide reads, in one-letter code: ER-localized J domain-containing protein 5 (295 aa).

Residues 1 to 20 form the signal peptide; that stretch reads MNGYWKPALVVLGLVSLSYA. Over 21–130 the chain is Lumenal; it reads FTTIETEIFQ…GFYFSRMKPK (110 aa). A J domain is found at 42 to 110; that stretch reads DMNFYKFLKL…RKIYDYYLQN (69 aa). A helical membrane pass occupies residues 131 to 151; it reads TWFLLAFIWIVVNIGQYIISI. The Cytoplasmic portion of the chain corresponds to 152–295; the sequence is IQYRSQRSRI…PNGKVIYSRK (144 aa). Residues 259-287 are disordered; the sequence is KYDGNQTKKGNKVKKGSAKKGQKKMELPN. Residues 267–280 are compositionally biased toward basic residues; the sequence is KGNKVKKGSAKKGQ.

It belongs to the DnaJ family.

It is found in the endoplasmic reticulum membrane. Functionally, dnaJ-like chaperone required for the folding capacity of the endoplasmic reticulum. The chain is ER-localized J domain-containing protein 5 (ERJ5) from Saccharomyces cerevisiae (strain ATCC 204508 / S288c) (Baker's yeast).